The sequence spans 405 residues: MAVKTLKDLLDEGVDGRHVIVRSDFNVPLNDDREITDKGRIIASLPTLKALSEGGAKVIVMAHLGRPKGEVNEKYSLAPVAEALSDELGQYVALAADVVGEDAHERANGLTEGDILLLENVRFDPRETSKDEAERTAFAQELAALAADNGAFVSDGFGVVHRAQTSVYDIAKLLPHYAGGLVETEISVLEKIAESPEAPYVVVLGGSKVSDKIGVIEALAAKADKIIVGGGMCYTFLAAQGHNVQQSLLQEEMKATCTDLLARFGDKIVLPVDLVAASEFNKDAEKQIVDLDSIPEGWMSLDIGPESVKNFGEVLSTAKTIFWNGPMGVFEFAAFSEGTRGIAQAIIDATAGNDAFSVVGGGDSAASVRVLGLNEDGFSHISTGGGASLEYLEGKELPGVAILAQ.

Residues 24 to 26 (DFN), arginine 40, 63 to 66 (HLGR), arginine 122, and arginine 162 each bind substrate. Residues lysine 212, glutamate 331, and 361–364 (GGDS) contribute to the ATP site.

The protein belongs to the phosphoglycerate kinase family. In terms of assembly, monomer.

Its subcellular location is the cytoplasm. The enzyme catalyses (2R)-3-phosphoglycerate + ATP = (2R)-3-phospho-glyceroyl phosphate + ADP. It participates in carbohydrate degradation; glycolysis; pyruvate from D-glyceraldehyde 3-phosphate: step 2/5. The polypeptide is Phosphoglycerate kinase (pgk) (Corynebacterium glutamicum (strain ATCC 13032 / DSM 20300 / JCM 1318 / BCRC 11384 / CCUG 27702 / LMG 3730 / NBRC 12168 / NCIMB 10025 / NRRL B-2784 / 534)).